The following is a 459-amino-acid chain: MEIAMLELLIGLVVTFAVGYFIVKGYKPAGILLTAGILLLILTGILGHKVLPGQMESTGNLLTDAMEYVKYMLQNRGGGLGMQIMLLCGFASYMTHIGANNVVVKQFSKPLSFIKSPYILLVAAYLVACLMSLAVSSATGLGVLLMATLFPMMTAMGISRPAAVAVCASPAAIILSPTSGDVVIAAEKSGLPLHVFAVETVLPVSICAIIVMAAAAYFWNQYLDKKDNTPMEKVDLSEMEVKSPAYYAVLPFLPIIGVFVFNGETLPGITLDIYTIVVLSIFIGVLVDYITKRFNGKQTLEDLEACYEGMADAFKGVVMLLVAAGVFAQGLMSIGAIDNLLHLAEVAGAGGIALMLILTGLTVAAAIATGSGNAPFYAFVELAPSLAAKMGLNPAFLIIPMLQASNLGRTISPVSGVVVATAGMGKISPFEVVKRTSVPVLLGLVTVIIGTMVLVPMHA.

The next 12 membrane-spanning stretches (helical) occupy residues 3-23 (IAML…YFIV), 28-48 (PAGI…ILGH), 79-99 (GLGM…HIGA), 118-138 (YILL…VSSA), 139-159 (TGLG…MGIS), 164-184 (VAVC…DVVI), 195-215 (VFAV…MAAA), 243-263 (SPAY…VFNG), 267-287 (PGIT…GVLV), 317-337 (VVML…IGAI), 347-367 (AGAG…AAAI), and 437-457 (SVPV…LVPM).

It belongs to the DcuC/DcuD transporter (TC 2.A.61) family.

Its subcellular location is the cell inner membrane. It catalyses the reaction fumarate(in) + succinate(out) = fumarate(out) + succinate(in). Responsible for the transport of C4-dicarboxylates during anaerobic growth. Catalyzes the uptake of fumarate coupled to the export of succinate. This is Probable anaerobic C4-dicarboxylate transporter DcuC (dcuC) from Vibrio cholerae serotype O1 (strain ATCC 39315 / El Tor Inaba N16961).